Reading from the N-terminus, the 479-residue chain is uncharacterized protein (479 aa).

Positions L180–T203 are disordered. Over residues S187 to I202 the composition is skewed to polar residues. A PE-PPE domain is found at P240 to S462.

The protein belongs to the mycobacterial PPE family.

This is an uncharacterized protein from Mycobacterium tuberculosis (strain CDC 1551 / Oshkosh).